The following is an 807-amino-acid chain: Probable phosphoketolase (807 aa).

It belongs to the XFP family. The cofactor is thiamine diphosphate.

This chain is Probable phosphoketolase, found in Mesorhizobium japonicum (strain LMG 29417 / CECT 9101 / MAFF 303099) (Mesorhizobium loti (strain MAFF 303099)).